The primary structure comprises 174 residues: Co-chaperone protein HscB homolog (174 aa).

Residues 2–74 (NYFELFKFSP…IRRAEHLLSL (73 aa)) enclose the J domain.

Belongs to the HscB family. As to quaternary structure, interacts with HscA and stimulates its ATPase activity.

Functionally, co-chaperone involved in the maturation of iron-sulfur cluster-containing proteins. Seems to help targeting proteins to be folded toward HscA. This chain is Co-chaperone protein HscB homolog, found in Shewanella sp. (strain W3-18-1).